A 112-amino-acid polypeptide reads, in one-letter code: NADH-quinone oxidoreductase subunit K (112 aa).

Helical transmembrane passes span 14-34, 39-59, and 76-96; these read LEGYLTVAAIMFAIGAWGALI, VVVFMCVELMINAVNLTLVAF, and LIIAIAAAEVAVGLAIVLAIF.

The protein belongs to the complex I subunit 4L family. In terms of assembly, NDH-1 is composed of 14 different subunits. Subunits NuoA, H, J, K, L, M, N constitute the membrane sector of the complex.

It is found in the cell membrane. It carries out the reaction a quinone + NADH + 5 H(+)(in) = a quinol + NAD(+) + 4 H(+)(out). In terms of biological role, NDH-1 shuttles electrons from NADH, via FMN and iron-sulfur (Fe-S) centers, to quinones in the respiratory chain. The immediate electron acceptor for the enzyme in this species is believed to be a menaquinone. Couples the redox reaction to proton translocation (for every two electrons transferred, four hydrogen ions are translocated across the cytoplasmic membrane), and thus conserves the redox energy in a proton gradient. In Rubrobacter xylanophilus (strain DSM 9941 / JCM 11954 / NBRC 16129 / PRD-1), this protein is NADH-quinone oxidoreductase subunit K.